The primary structure comprises 744 residues: Tripartite motif-containing protein 2 (744 aa).

Ser-10 is subject to Phosphoserine. Residues 23–64 (CSICLERYKNPKVLPCLHTFCERCLQNYIPAHSLTLSCPVCR) form an RING-type zinc finger. The segment at 113-154 (GKPLSCPNHDGNVMEFYCQSCETAMCRECTEGEHAEHPTVPL) adopts a B box-type zinc-finger fold. Cys-118, His-121, Cys-141, and His-146 together coordinate Zn(2+). Residues 320–421 (TTNAVASETV…IRGSPFKLKV (102 aa)) form a Filamin repeat. Phosphothreonine is present on Thr-371. A phosphoserine mark is found at Ser-375, Ser-424, and Ser-428. The interval 432–462 (EGVKRRVKSPGSGHVKQKAVKRPASMYSTGK) is disordered. NHL repeat units lie at residues 473 to 516 (IFRV…FSND), 520 to 563 (KSRF…FSSD), 564 to 605 (GKFK…FQPN), 609 to 652 (VTRF…FNQE), 656 to 699 (MLKF…FDGS), and 700 to 743 (GSFL…YRYL).

The protein belongs to the TRIM/RBCC family. As to quaternary structure, forms homooligomers. Interacts with TRIM3; this interaction reduces TRIM2 activity. Interacts with myosin V; myosin V may not be a substrate for ubiquitination. Interacts with NEFL. Interacts with phosphorylated BCL2L11. Interacts with SIRPA. RING-type zinc finger-dependent and UBE2D1-dependent autoubiquitination.

The protein localises to the cytoplasm. The catalysed reaction is S-ubiquitinyl-[E2 ubiquitin-conjugating enzyme]-L-cysteine + [acceptor protein]-L-lysine = [E2 ubiquitin-conjugating enzyme]-L-cysteine + N(6)-ubiquitinyl-[acceptor protein]-L-lysine.. Its pathway is protein modification; protein ubiquitination. UBE2D1-dependent E3 ubiquitin-protein ligase that mediates the ubiquitination of NEFL and of phosphorylated BCL2L11. Plays a neuroprotective function. May play a role in neuronal rapid ischemic tolerance. Plays a role in antiviral immunity and limits New World arenavirus infection independently of its ubiquitin ligase activity. The chain is Tripartite motif-containing protein 2 (TRIM2) from Homo sapiens (Human).